A 351-amino-acid polypeptide reads, in one-letter code: Protein Wnt-4 (351 aa).

The N-terminal stretch at methionine 1–alanine 22 is a signal peptide. N-linked (GlcNAc...) asparagine glycans are attached at residues asparagine 21 and asparagine 88. 11 cysteine pairs are disulfide-bonded: cysteine 78/cysteine 89, cysteine 128/cysteine 136, cysteine 138/cysteine 155, cysteine 206/cysteine 220, cysteine 208/cysteine 215, cysteine 280/cysteine 311, cysteine 296/cysteine 306, cysteine 310/cysteine 350, cysteine 326/cysteine 341, cysteine 328/cysteine 338, and cysteine 333/cysteine 334. A lipid anchor (O-palmitoleoyl serine; by PORCN) is attached at serine 212. A glycan (N-linked (GlcNAc...) asparagine) is linked at asparagine 297.

This sequence belongs to the Wnt family. As to quaternary structure, interacts with CPZ. In terms of processing, palmitoleoylation is required for efficient binding to frizzled receptors. Depalmitoleoylation leads to Wnt signaling pathway inhibition. As to expression, predominantly expressed in the diencephalon neuromere D2.

It localises to the secreted. Its subcellular location is the extracellular space. It is found in the extracellular matrix. In terms of biological role, ligand for members of the frizzled family of seven transmembrane receptors. Plays an important role in embryonic development. The protein is Protein Wnt-4 (WNT4) of Gallus gallus (Chicken).